Consider the following 474-residue polypeptide: MKTMKRVKTVATRLSDFGKWYTDICLKAELIAYSEAKGFIIYLPYGYALWENIQKHLNCTLQKTGHQNVYFPLVFPEKLFHKEKEHIQGFSPEAAMITTTGKKNLSEKLVIRPTSEILFSQYYSKTITSYRDLPKLYNQWCNVVRWEKTTKPFLRGKEFLWQEGHTVHATEQEAMQQTLSILDIYQKLGKDLLALPFVCGKKTETEKFAGALITYSIEALMHDGQALQAGTSHYLGIIFAKSFQIQFQDCDNQKKYAHQTSWGVSTRLIGALIMVHSDDEGLVLPPYVAPMQIVIIPLQTQDESVKQVSENLFSILQKNYRVHLDLQDKTAGWKFSQYELKGVPLRIEIGKRGLENDEVTIFQRYNFAKQNIKIKDFPSQIPQLFETMHNNMYQKALQHLEQNRKQATTYEEFKTYLKQGGYVAMSISGTDAELQIKQETGATARVILETNLITANCPVTNKKALQTVLFARAY.

Belongs to the class-II aminoacyl-tRNA synthetase family. ProS type 3 subfamily. In terms of assembly, homodimer.

The protein localises to the cytoplasm. It carries out the reaction tRNA(Pro) + L-proline + ATP = L-prolyl-tRNA(Pro) + AMP + diphosphate. In terms of biological role, catalyzes the attachment of proline to tRNA(Pro) in a two-step reaction: proline is first activated by ATP to form Pro-AMP and then transferred to the acceptor end of tRNA(Pro). The polypeptide is Proline--tRNA ligase (Aster yellows witches'-broom phytoplasma (strain AYWB)).